A 143-amino-acid chain; its full sequence is Large-conductance mechanosensitive channel (143 aa).

2 helical membrane passes run 10 to 30 (FAVKGNVMDLAVGVIIGGAFS) and 89 to 109 (GSFITVAINFVILAFIIFLMV).

The protein belongs to the MscL family. Homopentamer.

It localises to the cell inner membrane. Functionally, channel that opens in response to stretch forces in the membrane lipid bilayer. May participate in the regulation of osmotic pressure changes within the cell. In Burkholderia vietnamiensis (strain G4 / LMG 22486) (Burkholderia cepacia (strain R1808)), this protein is Large-conductance mechanosensitive channel.